A 72-amino-acid polypeptide reads, in one-letter code: DNA-directed RNA polymerase subunit omega (72 aa).

Belongs to the RNA polymerase subunit omega family. As to quaternary structure, the RNAP catalytic core consists of 2 alpha, 1 beta, 1 beta' and 1 omega subunit. When a sigma factor is associated with the core the holoenzyme is formed, which can initiate transcription.

The enzyme catalyses RNA(n) + a ribonucleoside 5'-triphosphate = RNA(n+1) + diphosphate. Functionally, promotes RNA polymerase assembly. Latches the N- and C-terminal regions of the beta' subunit thereby facilitating its interaction with the beta and alpha subunits. This is DNA-directed RNA polymerase subunit omega from Francisella tularensis subsp. tularensis (strain FSC 198).